We begin with the raw amino-acid sequence, 354 residues long: Methionine import ATP-binding protein MetN (354 aa).

The 243-residue stretch at leucine 8–isoleucine 250 folds into the ABC transporter domain. Residue glycine 42–serine 49 participates in ATP binding.

It belongs to the ABC transporter superfamily. Methionine importer (TC 3.A.1.24) family. In terms of assembly, the complex is composed of two ATP-binding proteins (MetN), two transmembrane proteins (MetI) and a solute-binding protein (MetQ).

The protein localises to the cell membrane. The catalysed reaction is L-methionine(out) + ATP + H2O = L-methionine(in) + ADP + phosphate + H(+). It catalyses the reaction D-methionine(out) + ATP + H2O = D-methionine(in) + ADP + phosphate + H(+). Functionally, part of the ABC transporter complex MetNIQ involved in methionine import. Responsible for energy coupling to the transport system. The chain is Methionine import ATP-binding protein MetN from Streptococcus pyogenes serotype M18 (strain MGAS8232).